Here is a 360-residue protein sequence, read N- to C-terminus: Phospho-N-acetylmuramoyl-pentapeptide-transferase (360 aa).

Transmembrane regions (helical) follow at residues 27–47 (VMAV…LIRF), 71–91 (TPTM…LLWA), 98–118 (VWIV…DDYL), 142–162 (LVLA…TFVM), 168–188 (YMPY…VGSS), 199–219 (GLAI…AYLT), 236–256 (ASEL…FLWF), 263–283 (VFMG…IAVL), 288–308 (ILLV…ILQV), and 338–358 (VIVR…VTLK).

Belongs to the glycosyltransferase 4 family. MraY subfamily. Requires Mg(2+) as cofactor.

It localises to the cell inner membrane. The catalysed reaction is UDP-N-acetyl-alpha-D-muramoyl-L-alanyl-gamma-D-glutamyl-meso-2,6-diaminopimeloyl-D-alanyl-D-alanine + di-trans,octa-cis-undecaprenyl phosphate = di-trans,octa-cis-undecaprenyl diphospho-N-acetyl-alpha-D-muramoyl-L-alanyl-D-glutamyl-meso-2,6-diaminopimeloyl-D-alanyl-D-alanine + UMP. It functions in the pathway cell wall biogenesis; peptidoglycan biosynthesis. Its function is as follows. Catalyzes the initial step of the lipid cycle reactions in the biosynthesis of the cell wall peptidoglycan: transfers peptidoglycan precursor phospho-MurNAc-pentapeptide from UDP-MurNAc-pentapeptide onto the lipid carrier undecaprenyl phosphate, yielding undecaprenyl-pyrophosphoryl-MurNAc-pentapeptide, known as lipid I. This Psychromonas ingrahamii (strain DSM 17664 / CCUG 51855 / 37) protein is Phospho-N-acetylmuramoyl-pentapeptide-transferase.